A 335-amino-acid chain; its full sequence is 5-formaminoimidazole-4-carboxamide-1-(beta)-D-ribofuranosyl 5'-monophosphate synthetase (335 aa).

Residues His-21 and Ser-86 each coordinate 5-amino-1-(5-phospho-beta-D-ribosyl)imidazole-4-carboxamide. The ATP-grasp domain maps to 107 to 315 (RELLRWEADQ…YFDKPMDMGE (209 aa)). ATP contacts are provided by residues 137-189 (PTEV…VPAY) and Glu-211. Asn-231 lines the 5-amino-1-(5-phospho-beta-D-ribosyl)imidazole-4-carboxamide pocket. The Mg(2+) site is built by Glu-270 and Glu-283.

The protein belongs to the phosphohexose mutase family. Mg(2+) serves as cofactor. Mn(2+) is required as a cofactor.

It carries out the reaction 5-amino-1-(5-phospho-beta-D-ribosyl)imidazole-4-carboxamide + formate + ATP = 5-formamido-1-(5-phospho-D-ribosyl)imidazole-4-carboxamide + ADP + phosphate. It participates in purine metabolism; IMP biosynthesis via de novo pathway; 5-formamido-1-(5-phospho-D-ribosyl)imidazole-4-carboxamide from 5-amino-1-(5-phospho-D-ribosyl)imidazole-4-carboxamide (formate route): step 1/1. Its function is as follows. Catalyzes the ATP- and formate-dependent formylation of 5-aminoimidazole-4-carboxamide-1-beta-d-ribofuranosyl 5'-monophosphate (AICAR) to 5-formaminoimidazole-4-carboxamide-1-beta-d-ribofuranosyl 5'-monophosphate (FAICAR) in the absence of folates. The protein is 5-formaminoimidazole-4-carboxamide-1-(beta)-D-ribofuranosyl 5'-monophosphate synthetase of Pyrobaculum arsenaticum (strain DSM 13514 / JCM 11321 / PZ6).